The sequence spans 339 residues: Dihydroorotase (339 aa).

2 residues coordinate Zn(2+): His12 and His14. Substrate-binding positions include 14–16 and Asn40; that span reads HVR. Residues Lys94, His133, His167, and Asp239 each contribute to the Zn(2+) site. Lys94 is modified (N6-carboxylysine). Substrate is bound at residue His133. Asp239 is an active-site residue. Substrate is bound by residues His243 and Ala255.

Belongs to the metallo-dependent hydrolases superfamily. DHOase family. Class II DHOase subfamily. As to quaternary structure, homodimer. It depends on Zn(2+) as a cofactor.

It catalyses the reaction (S)-dihydroorotate + H2O = N-carbamoyl-L-aspartate + H(+). It functions in the pathway pyrimidine metabolism; UMP biosynthesis via de novo pathway; (S)-dihydroorotate from bicarbonate: step 3/3. Its function is as follows. Catalyzes the reversible cyclization of carbamoyl aspartate to dihydroorotate. The protein is Dihydroorotase of Helicobacter pylori (strain J99 / ATCC 700824) (Campylobacter pylori J99).